A 978-amino-acid chain; its full sequence is MKLEHPDRLMNRTPLSLAALEVHDAFAERHIGPDSADQQAMLEALGFASRAALIDAVIPKTIRRTEPLPLGPFAQPKSEAEALATLRELADRNQVFRSYIGQGYYNAHTPTVILRNVLENPAWYTAYTPYQPEISQGRLEALLNFQQMIVDLTGLAISNASLLDEATAAAEAMTLLQRIGKPKSNVFYVADDVLPQTIEVVKTRATPVGIEVKVGPAADAANANAFGVLLQYPGVNGDVRDYRALAEAIHAAGGHVVVAADLLALTVLTPPGEWGADVAVGNTQRFGVPVGFGGPHAAYLAVRDEFKRQMPGRLVGVTVDAQGNPALRLALQTREQHIRREKATSNVCTAQALLAIMASMYAVYHGPHGLKTIALRVNRIAALLAEGAKQLGYTLVNETFFDTLTFETGARTQALHDAALAKRINLRRVSDTQVGLSVDETTTRRDLADLLEVFAQAAGAKIVPQVDALDSTIAASDTASVPPALERTSAYLTHHVFNRHHSETEMLRYLRSLSDKDLALDRSMIPLGSCTMKLNATSEMLPVTWPEFGQIHPFAPAEQTVGYREMIDQLEAMLVAATGYAAVSLQPNAGSQGEYAGLLIIHAYHASRGEAHRNVCLIPASAHGTNPASAHMAGMQVIVVACDAQGNVDIEDLKKKAEQHADKLAAIMITYPSTHGVFEQNVREICEIVHAHGGQVYVDGANMNAMVGLTAPGQFGGDVSHLNLHKTFCIPHGGGGPGVGPVAVGAHLAQFLPNQISSGYERAPNGIGAVSGAPYGSASILPISWMYIAMMGAKNLTAATETAILNANYVAKKLAPHYPVLYSGPGGLVAHECILDLRPIKETSGITVDDVAKRLADYGFHAPTMSFPVPGTLMVEPTESESKEELDRFIEAMIAIREEIRAVEEGRSDREDNPLKHAPHTAAVVIANDWKHAYARETAAYPLPTLIAKKYWPPVGRADNVYGDRNLFCSCVPIADYE.

Lysine 726 bears the N6-(pyridoxal phosphate)lysine mark.

Belongs to the GcvP family. The glycine cleavage system is composed of four proteins: P, T, L and H. Pyridoxal 5'-phosphate serves as cofactor.

The enzyme catalyses N(6)-[(R)-lipoyl]-L-lysyl-[glycine-cleavage complex H protein] + glycine + H(+) = N(6)-[(R)-S(8)-aminomethyldihydrolipoyl]-L-lysyl-[glycine-cleavage complex H protein] + CO2. In terms of biological role, the glycine cleavage system catalyzes the degradation of glycine. The P protein binds the alpha-amino group of glycine through its pyridoxal phosphate cofactor; CO(2) is released and the remaining methylamine moiety is then transferred to the lipoamide cofactor of the H protein. The polypeptide is Glycine dehydrogenase (decarboxylating) (Paraburkholderia xenovorans (strain LB400)).